The primary structure comprises 411 residues: ATP-dependent Clp protease ATP-binding subunit ClpX (411 aa).

The 49-residue stretch at 1–49 (MSDRDIRCSFCGRTQKEVKKLIAGPGVYICDECVKLAYDIIEEDEEEDV) folds into the ClpX-type ZB domain. Zn(2+) contacts are provided by Cys-8, Cys-11, Cys-30, and Cys-33. 115 to 122 (PTGVGKTL) contacts ATP.

This sequence belongs to the ClpX chaperone family. In terms of assembly, component of the ClpX-ClpP complex. Forms a hexameric ring that, in the presence of ATP, binds to fourteen ClpP subunits assembled into a disk-like structure with a central cavity, resembling the structure of eukaryotic proteasomes.

In terms of biological role, ATP-dependent specificity component of the Clp protease. It directs the protease to specific substrates. Can perform chaperone functions in the absence of ClpP. The sequence is that of ATP-dependent Clp protease ATP-binding subunit ClpX from Dictyoglomus thermophilum (strain ATCC 35947 / DSM 3960 / H-6-12).